Here is a 333-residue protein sequence, read N- to C-terminus: Atrochrysone carboxyl ACP thioesterase MYCFIDRAFT_190111 (333 aa).

Residues His108, His110, Asp112, and His113 each contribute to the Zn(2+) site. Asp112 (proton donor/acceptor) is an active-site residue.

This sequence belongs to the metallo-beta-lactamase superfamily. Zn(2+) serves as cofactor.

It catalyses the reaction atrochrysone carboxyl-[ACP] + H2O = atrochrysone carboxylate + holo-[ACP] + H(+). Its pathway is secondary metabolite biosynthesis. Functionally, atrochrysone carboxyl ACP thioesterase; part of the gene cluster that mediates the biosynthesis of an emodin derivative that may be involved in black Sigatoka disease of banana. The pathway begins with the synthesis of atrochrysone thioester by the polyketide synthase PKS8-1. The atrochrysone carboxyl ACP thioesterase MYCFIDRAFT_190111 then breaks the thioester bond and releases the atrochrysone carboxylic acid from PKS8-1. The decarboxylase MYCFIDRAFT_34057 then catalyzes the concerted decarboxylation-elimination required to convert atochrysone carboxylic acid into emodin anthrone, which is further oxidized to emodin by the anthrone oxygenase MYCFIDRAFT_34418. The functions of the other tailoring enzymes as well as the final product of the cluster have still to be identified. This is Atrochrysone carboxyl ACP thioesterase MYCFIDRAFT_190111 from Pseudocercospora fijiensis (strain CIRAD86) (Black leaf streak disease fungus).